The primary structure comprises 60 residues: Large ribosomal subunit protein bL32 (60 aa).

The interval 1–60 (MAVQQNKKSPSKRGMHRSHNALTVPGIAVEPTTGETHLRHHISPNGFYRGRQVLKNKSEA) is disordered. The span at 9 to 19 (SPSKRGMHRSH) shows a compositional bias: basic residues.

The protein belongs to the bacterial ribosomal protein bL32 family.

The protein is Large ribosomal subunit protein bL32 of Paracidovorax citrulli (strain AAC00-1) (Acidovorax citrulli).